Here is a 75-residue protein sequence, read N- to C-terminus: UPF0270 protein PST_1436 (75 aa).

It belongs to the UPF0270 family.

This chain is UPF0270 protein PST_1436, found in Stutzerimonas stutzeri (strain A1501) (Pseudomonas stutzeri).